Reading from the N-terminus, the 154-residue chain is Protein X (154 aa).

Positions 68 to 117 (PCALRFTSARRMETTVNAHQILPKVLHKRTLGLSAMSTTDLEAYFKDCLF) are mitochondrial targeting sequence.

This sequence belongs to the orthohepadnavirus protein X family. In terms of assembly, may form homodimer. May interact with host CEBPA, CFLAR, CREB1, DDB1, E4F1, HBXIP, HSPD1/HSP60, NFKBIA, POLR2E and SMAD4. Interacts with host SMC5-SMC6 complex and induces its degradation. Interacts with host TRPC4AP; leading to prevent ubiquitination of TRPC4AP. Interacts with host PLSCR1; this interaction promotes ubiquitination and degradation of HBx and impairs HBx-mediated cell proliferation. In terms of processing, a fraction may be phosphorylated in insect cells and HepG2 cells, a human hepatoblastoma cell line. Phosphorylated in vitro by host protein kinase C or mitogen-activated protein kinase. N-acetylated in insect cells.

It is found in the host cytoplasm. The protein localises to the host nucleus. Its subcellular location is the host mitochondrion. Functionally, multifunctional protein that plays a role in silencing host antiviral defenses and promoting viral transcription. Does not seem to be essential for HBV infection. May be directly involved in development of cirrhosis and liver cancer (hepatocellular carcinoma). Most of cytosolic activities involve modulation of cytosolic calcium. The effect on apoptosis is controversial depending on the cell types in which the studies have been conducted. May induce apoptosis by localizing in mitochondria and causing loss of mitochondrial membrane potential. May also modulate apoptosis by binding host CFLAR, a key regulator of the death-inducing signaling complex (DISC). Promotes viral transcription by using the host E3 ubiquitin ligase DDB1 to target the SMC5-SMC6 complex to proteasomal degradation. This host complex would otherwise bind to viral episomal DNA, and prevents its transcription. Moderately stimulates transcription of many different viral and cellular transcription elements. Promoters and enhancers stimulated by HBx contain DNA binding sites for NF-kappa-B, AP-1, AP-2, c-EBP, ATF/CREB, or the calcium-activated factor NF-AT. The protein is Protein X of Hepatitis B virus genotype E subtype ayw4 (isolate Kou) (HBV-E).